A 525-amino-acid chain; its full sequence is COP9 signalosome complex subunit 1b (525 aa).

Residues 298–460 form the PCI domain; it reads HFLNANFDHC…KILFAKEADQ (163 aa).

This sequence belongs to the CSN1 family. Component of the CSN complex, probably composed of CSN1b, alien/CSN2, CSN3, CSN4, CSN5, CSN6, CSN7 and CSN8.

Its subcellular location is the cytoplasm. The protein resides in the nucleus. Its function is as follows. Essential component of the COP9 signalosome complex (CSN), a complex involved in various cellular and developmental processes. The CSN complex is an essential regulator of the ubiquitin (Ubl) conjugation pathway by mediating the deneddylation of the cullin subunits of the SCF-type E3 ligase complexes, leading to decrease the Ubl ligase activity of SCF. The CSN complex plays an essential role in oogenesis and embryogenesis and is required for proper photoreceptor R cell differentiation and promote lamina glial cell migration or axon targeting. It also promotes Ubl-dependent degradation of cyclin E (CycE) during early oogenesis. This chain is COP9 signalosome complex subunit 1b (CSN1b), found in Drosophila melanogaster (Fruit fly).